Reading from the N-terminus, the 1107-residue chain is Polyphosphatidylinositol phosphatase INP53 (1107 aa).

One can recognise an SAC domain in the interval 142-482 (LKKLLSNGSF…GDQISQIYTG (341 aa)). Position 497 is a phosphoserine (S497). The interval 926–1107 (TASSVASSSP…LDSWQPLTPK (182 aa)) is disordered. The span at 927-942 (ASSVASSSPVSSASAS) shows a compositional bias: low complexity. The span at 943–956 (LQPVRTQNSSQSRT) shows a compositional bias: polar residues. At S986 the chain carries Phosphoserine. Composition is skewed to polar residues over residues 987-1005 (PTPQ…NIQE), 1020-1038 (FSQN…SPMS), 1045-1063 (NSAS…QTPT), and 1097-1107 (TLDSWQPLTPK). At S1035 the chain carries Phosphoserine. Phosphothreonine is present on T1105.

The protein belongs to the synaptojanin family. This sequence in the central section; belongs to the inositol 1,4,5-trisphosphate 5-phosphatase family. In terms of assembly, interacts (via SAC domain) with BSP1; the interaction is direct. Interacts with CHC1.

Its subcellular location is the cytoplasm. It carries out the reaction a 1,2-diacyl-sn-glycero-3-phospho-(1D-myo-inositol-4,5-bisphosphate) + H2O = a 1,2-diacyl-sn-glycero-3-phospho-(1D-myo-inositol 4-phosphate) + phosphate. Its function is as follows. Dephosphorylates a number of phosphatidylinositols (PIs) like phosphatidylinositol 4,5-bisphosphate (PtdIns(4,5)P2), but also phosphatidylinositol 3-phosphate (PtdIns(3)P), phosphatidylinositol 4-phosphate (PtdIns(4)P), and phosphatidylinositol 3,5-bisphosphate (PtdIns(3,5)P2). Controls the cellular levels and subcellular distribution of phosphatidylinositol 3-phosphate and phosphatidylinositol 4,5-bisphosphate. Plays an essential role in a TGN (trans Golgi network)-to-early endosome pathway. Involved in clathrin-mediated protein sorting at the TGN. The protein is Polyphosphatidylinositol phosphatase INP53 (INP53) of Saccharomyces cerevisiae (strain ATCC 204508 / S288c) (Baker's yeast).